A 531-amino-acid chain; its full sequence is Doublesex- and mab-3-related transcription factor A2 (531 aa).

The DM DNA-binding region spans 69-116 (CARCRNHGVVSALKGHKRYCRWKDCLCAKCTLIAERQRVMAAQVALRR). The segment at 197–312 (LQAGRPDSPQ…GGPGPRQRTP (116 aa)) is disordered. Over residues 274–285 (PGSSSPLGSESG) the composition is skewed to low complexity. A DMA domain is found at 310-345 (RTPLDILTRVFPGHRRGVLELVLQGCGGDVVQAIEQ).

It belongs to the DMRT family. Expressed in adult brain and testis, as well as in embryonic ovary, kidney, heart, lung, stomach and brain.

It localises to the nucleus. Functionally, may be involved in sexual development. The sequence is that of Doublesex- and mab-3-related transcription factor A2 (Dmrta2) from Mus musculus (Mouse).